The chain runs to 673 residues: UvrABC system protein B (673 aa).

Positions 26–414 constitute a Helicase ATP-binding domain; it reads EGLEDGLAHQ…GGDVVDQVVR (389 aa). 39–46 is an ATP binding site; that stretch reads GVTGSGKT. A Beta-hairpin motif is present at residues 92–115; the sequence is YYDYYQPEAYVPSSDTFIEKDASV. One can recognise a Helicase C-terminal domain in the interval 431 to 597; sequence QVDDLLSEIR…GLNKKVVDIL (167 aa). Residues 633–668 enclose the UVR domain; that stretch reads LQKIHELEGLMMQHAQNLEFEEAAQIRDQLHQLREL.

The protein belongs to the UvrB family. In terms of assembly, forms a heterotetramer with UvrA during the search for lesions. Interacts with UvrC in an incision complex.

The protein localises to the cytoplasm. In terms of biological role, the UvrABC repair system catalyzes the recognition and processing of DNA lesions. A damage recognition complex composed of 2 UvrA and 2 UvrB subunits scans DNA for abnormalities. Upon binding of the UvrA(2)B(2) complex to a putative damaged site, the DNA wraps around one UvrB monomer. DNA wrap is dependent on ATP binding by UvrB and probably causes local melting of the DNA helix, facilitating insertion of UvrB beta-hairpin between the DNA strands. Then UvrB probes one DNA strand for the presence of a lesion. If a lesion is found the UvrA subunits dissociate and the UvrB-DNA preincision complex is formed. This complex is subsequently bound by UvrC and the second UvrB is released. If no lesion is found, the DNA wraps around the other UvrB subunit that will check the other stand for damage. The sequence is that of UvrABC system protein B from Shigella dysenteriae serotype 1 (strain Sd197).